A 122-amino-acid chain; its full sequence is Small ribosomal subunit protein bS6 (122 aa).

The tract at residues 97–122 (TAPSPMMKAVQKEDAAKSHRAEAPAA) is disordered. The span at 106-122 (VQKEDAAKSHRAEAPAA) shows a compositional bias: basic and acidic residues.

Belongs to the bacterial ribosomal protein bS6 family.

Binds together with bS18 to 16S ribosomal RNA. This is Small ribosomal subunit protein bS6 from Janthinobacterium sp. (strain Marseille) (Minibacterium massiliensis).